We begin with the raw amino-acid sequence, 142 residues long: Large ribosomal subunit protein uL11 (142 aa).

The protein belongs to the universal ribosomal protein uL11 family. In terms of assembly, part of the ribosomal stalk of the 50S ribosomal subunit. Interacts with L10 and the large rRNA to form the base of the stalk. L10 forms an elongated spine to which L12 dimers bind in a sequential fashion forming a multimeric L10(L12)X complex. Post-translationally, one or more lysine residues are methylated.

Functionally, forms part of the ribosomal stalk which helps the ribosome interact with GTP-bound translation factors. The polypeptide is Large ribosomal subunit protein uL11 (Mycobacterium tuberculosis (strain ATCC 25177 / H37Ra)).